We begin with the raw amino-acid sequence, 673 residues long: ATP-dependent zinc metalloprotease FtsH (673 aa).

Topologically, residues 1 to 7 (MNGFFKN) are cytoplasmic. The chain crosses the membrane as a helical span at residues 8–28 (LSLWLVIGLLMVMLFNLFNSP). The Periplasmic portion of the chain corresponds to 29–100 (QGPGQSITFS…DVREPEGTPM (72 aa)). The chain crosses the membrane as a helical span at residues 101–121 (LMQILISWFPMLLLIAVWIYF). The Cytoplasmic segment spans residues 122–673 (MRQMQSGGGR…DTPEGDDKDR (552 aa)). Position 194–201 (194–201 (GPPGTGKT)) interacts with ATP. His-416 is a Zn(2+) binding site. The active site involves Glu-417. Zn(2+)-binding residues include His-420 and Asp-492. A disordered region spans residues 601–673 (ALKPLKKKDE…DTPEGDDKDR (73 aa)). The segment covering 648 to 660 (STRTATEASTQEV) has biased composition (polar residues). Residues 661-673 (VSKDTPEGDDKDR) are compositionally biased toward basic and acidic residues.

This sequence in the central section; belongs to the AAA ATPase family. It in the C-terminal section; belongs to the peptidase M41 family. As to quaternary structure, homohexamer. The cofactor is Zn(2+).

The protein resides in the cell inner membrane. Acts as a processive, ATP-dependent zinc metallopeptidase for both cytoplasmic and membrane proteins. Plays a role in the quality control of integral membrane proteins. The polypeptide is ATP-dependent zinc metalloprotease FtsH (Magnetococcus marinus (strain ATCC BAA-1437 / JCM 17883 / MC-1)).